Consider the following 486-residue polypeptide: PTS system N-acetylmuramic acid-specific EIIBC component (486 aa).

The PTS EIIB type-1 domain occupies 1 to 89 (MAKITQTMIS…NKLIESVING (89 aa)). Cysteine 28 serves as the catalytic Phosphocysteine intermediate; for EIIB activity. A PTS EIIC type-1 domain is found at 127–486 (SKFATIFTPL…FFGSKDVDLS (360 aa)). Helical transmembrane passes span 129–149 (FATI…LLGF), 170–190 (LIAY…ILIG), 196–216 (AFGG…LGYN), 230–250 (FFGY…AAII), 268–288 (MILT…VVIM), 312–332 (AAIL…QGFV), 347–367 (LFPI…ALYF), 381–401 (GAII…VTLP), 411–431 (IGGA…LPVG), and 453–473 (IFAG…VGFL).

It is found in the cell inner membrane. The catalysed reaction is N-acetyl-beta-D-muramate(out) + N(pros)-phospho-L-histidyl-[protein] = N-acetyl-beta-D-muramate 6-phosphate(in) + L-histidyl-[protein]. Its function is as follows. The phosphoenolpyruvate-dependent sugar phosphotransferase system (sugar PTS), a major carbohydrate active transport system, catalyzes the phosphorylation of incoming sugar substrates concomitantly with their translocation across the cell membrane. This system is involved in N-acetylmuramic acid (MurNAc) transport, yielding cytoplasmic MurNAc-6-P. Is also able to take up anhydro-N-acetylmuramic acid (anhMurNAc), but cannot phosphorylate the carbon 6, probably because of the 1,6-anhydro ring. The polypeptide is PTS system N-acetylmuramic acid-specific EIIBC component (murP) (Vibrio vulnificus (strain YJ016)).